The chain runs to 103 residues: Co-chaperonin GroES (103 aa).

It belongs to the GroES chaperonin family. In terms of assembly, heptamer of 7 subunits arranged in a ring. Interacts with the chaperonin GroEL.

The protein resides in the cytoplasm. Together with the chaperonin GroEL, plays an essential role in assisting protein folding. The GroEL-GroES system forms a nano-cage that allows encapsulation of the non-native substrate proteins and provides a physical environment optimized to promote and accelerate protein folding. GroES binds to the apical surface of the GroEL ring, thereby capping the opening of the GroEL channel. The chain is Co-chaperonin GroES from Synechococcus sp. (strain JA-2-3B'a(2-13)) (Cyanobacteria bacterium Yellowstone B-Prime).